A 364-amino-acid chain; its full sequence is Urease accessory protein UreD (364 aa).

Disordered regions lie at residues 1 to 37 and 201 to 250; these read MDQDRSGAADAGNPDPGRGPAGSAEARNGAAAASSPA and PPEV…AGER. 3 stretches are compositionally biased toward low complexity: residues 21-37, 209-218, and 236-248; these read AGSAEARNGAAAASSPA, APDRGAPAAE, and AASSGGTGAAPAG.

It belongs to the UreD family. As to quaternary structure, ureD, UreF and UreG form a complex that acts as a GTP-hydrolysis-dependent molecular chaperone, activating the urease apoprotein by helping to assemble the nickel containing metallocenter of UreC. The UreE protein probably delivers the nickel.

Its subcellular location is the cytoplasm. Its function is as follows. Required for maturation of urease via the functional incorporation of the urease nickel metallocenter. The sequence is that of Urease accessory protein UreD from Kocuria rhizophila (strain ATCC 9341 / DSM 348 / NBRC 103217 / DC2201).